The sequence spans 418 residues: ML-236A carboxylate methylbutanoyltransferase mlcH (418 aa).

Arg-78 provides a ligand contact to monacolin J. Ser-81 serves as the catalytic Acyl-ester intermediate. Residues Arg-178, Tyr-193, and Tyr-262 each coordinate monacolin J. Gly-370 lines the 2-methylbutanoate pocket.

Belongs to the class-A beta-lactamase family.

It catalyses the reaction ML-236A carboxylate + (S)-2-methylbutanoyl-[2-methylbutanoate polyketide synthase] = mevinic carboxylate + holo-[2-methylbutanoate polyketide synthase]. Its pathway is polyketide biosynthesis. Compactin diketide synthase; part of the gene cluster that mediates the biosynthesis of compactin, also known as mevastatin or ML-236B, and which acts as a potent competitive inhibitor of HMG-CoA reductase. Compactin biosynthesis is performed in two stages. The first stage is catalyzed by the nonaketide synthase mlcA, which belongs to type I polyketide synthases and catalyzes the iterative nine-step formation of the polyketide. This PKS stage is completed by the action of dehydrogenase mlcG, which catalyzes the NADPH-dependent reduction of the unsaturated tetra-, penta- and heptaketide intermediates that arise during the mlcA-mediated biosynthesis of the nonaketide chain and leads to dihydro-ML-236C carboxylate. Covalently bound dihydro-ML-236C carboxylate is released from mlcA by the mlcF esterase. Conversion of dihydro-ML-236C carboxylate into ML-236A carboxylate is subsequently performed with the participation of molecular oxygen and P450 monoogygenase mlcC. Finally, mlcH performs the conversion of ML-236A carboxylate to ML-236B/compactin carboxylate through the addition of the side-chain diketide moiety produced by the diketide synthase mlcB. The protein is ML-236A carboxylate methylbutanoyltransferase mlcH of Penicillium citrinum.